A 127-amino-acid polypeptide reads, in one-letter code: NADPH-dependent 7-cyano-7-deazaguanine reductase (127 aa).

Cysteine 40 functions as the Thioimide intermediate in the catalytic mechanism. Aspartate 47 functions as the Proton donor in the catalytic mechanism. Substrate contacts are provided by residues 62-64 and 81-82; these read VEL and HE.

This sequence belongs to the GTP cyclohydrolase I family. QueF type 1 subfamily.

The protein resides in the cytoplasm. The enzyme catalyses 7-aminomethyl-7-carbaguanine + 2 NADP(+) = 7-cyano-7-deazaguanine + 2 NADPH + 3 H(+). Its pathway is tRNA modification; tRNA-queuosine biosynthesis. Functionally, catalyzes the NADPH-dependent reduction of 7-cyano-7-deazaguanine (preQ0) to 7-aminomethyl-7-deazaguanine (preQ1). In Campylobacter jejuni subsp. jejuni serotype O:6 (strain 81116 / NCTC 11828), this protein is NADPH-dependent 7-cyano-7-deazaguanine reductase.